The primary structure comprises 78 residues: Sec-independent protein translocase protein TatA (78 aa).

Residues 1–21 (MGGISIWQLLIIAVIVVLLFG) form a helical membrane-spanning segment. Positions 47-59 (ESEKKDADFEPKS) are enriched in basic and acidic residues. The segment at 47–78 (ESEKKDADFEPKSLEQQNKQAATESKKDKEQA) is disordered. Polar residues predominate over residues 60–69 (LEQQNKQAAT).

The protein belongs to the TatA/E family. The Tat system comprises two distinct complexes: a TatABC complex, containing multiple copies of TatA, TatB and TatC subunits, and a separate TatA complex, containing only TatA subunits. Substrates initially bind to the TatABC complex, which probably triggers association of the separate TatA complex to form the active translocon.

The protein resides in the cell inner membrane. Its function is as follows. Part of the twin-arginine translocation (Tat) system that transports large folded proteins containing a characteristic twin-arginine motif in their signal peptide across membranes. TatA could form the protein-conducting channel of the Tat system. The chain is Sec-independent protein translocase protein TatA from Vibrio vulnificus (strain YJ016).